A 64-amino-acid polypeptide reads, in one-letter code: Prokaryotic ubiquitin-like protein Pup (64 aa).

Residues 1-38 form a disordered region; it reads MAQEQTKRGGGGGEDDDPTGSTAAGQERREKLTEETDD. An ARC ATPase binding region spans residues 21–58; sequence STAAGQERREKLTEETDDLLDEIDDVLEENAEDFVRAY. A coiled-coil region spans residues 23 to 52; sequence AAGQERREKLTEETDDLLDEIDDVLEENAE. Q64 bears the Deamidated glutamine mark. Q64 is covalently cross-linked (Isoglutamyl lysine isopeptide (Gln-Lys) (interchain with K-? in acceptor proteins)).

The protein belongs to the prokaryotic ubiquitin-like protein family. As to quaternary structure, strongly interacts with the proteasome-associated ATPase ARC through a hydrophobic interface; the interacting region of Pup lies in its C-terminal half. There is one Pup binding site per ARC hexamer ring. In terms of processing, is modified by deamidation of its C-terminal glutamine to glutamate by the deamidase Dop, a prerequisite to the subsequent pupylation process.

The protein operates within protein degradation; proteasomal Pup-dependent pathway. Protein modifier that is covalently attached to lysine residues of substrate proteins, thereby targeting them for proteasomal degradation. The tagging system is termed pupylation. This chain is Prokaryotic ubiquitin-like protein Pup, found in Mycolicibacterium gilvum (strain PYR-GCK) (Mycobacterium gilvum (strain PYR-GCK)).